The sequence spans 84 residues: U8-theraphotoxin-Hhn1c 1 (84 aa).

Residues 1-21 (MKVVLIVCLVWVMAMMELVSC) form the signal peptide. Cystine bridges form between C23–C35, C29–C44, C34–C67, C54–C75, and C69–C81.

The protein belongs to the AVIT (prokineticin) family. As to expression, expressed by the venom gland.

Its subcellular location is the secreted. In Cyriopagopus hainanus (Chinese bird spider), this protein is U8-theraphotoxin-Hhn1c 1.